We begin with the raw amino-acid sequence, 428 residues long: Protein clpf-1 (428 aa).

ATP is bound by residues E16, R56, and 124 to 129 (DVGKTT).

This sequence belongs to the Clp1 family. Clp1 subfamily.

The protein localises to the nucleus. Functionally, required for endonucleolytic cleavage during polyadenylation-dependent pre-mRNA 3'-end formation. In Caenorhabditis elegans, this protein is Protein clpf-1.